The primary structure comprises 557 residues: Pectinesterase/pectinesterase inhibitor 18 (557 aa).

The signal sequence occupies residues 1-34; sequence MSNSNQPLLSKPKSLKHKNLCLVLSFVAILGSVA. The segment at 47–203 is pectinesterase inhibitor 18; the sequence is NNDDSLLTTS…VSRARVALAI (157 aa). The segment at 246–543 is pectinesterase 18; that stretch reads NVVVAKDGTG…FTVAKLIQGG (298 aa). Residues Thr321 and Gln351 each contribute to the substrate site. The active-site Proton donor; for pectinesterase activity is Asp374. Asp395 serves as the catalytic Nucleophile; for pectinesterase activity. Residues Arg463 and Trp465 each contribute to the substrate site.

This sequence in the N-terminal section; belongs to the PMEI family. In the C-terminal section; belongs to the pectinesterase family. As to expression, expressed in siliques, flowers, floral stems, rosette leaves and roots.

The protein localises to the secreted. It localises to the cell wall. The catalysed reaction is [(1-&gt;4)-alpha-D-galacturonosyl methyl ester](n) + n H2O = [(1-&gt;4)-alpha-D-galacturonosyl](n) + n methanol + n H(+). It carries out the reaction Endohydrolysis of the N-glycosidic bond at one specific adenosine on the 28S rRNA.. The protein operates within glycan metabolism; pectin degradation; 2-dehydro-3-deoxy-D-gluconate from pectin: step 1/5. In terms of biological role, acts in the modification of cell walls via demethylesterification of cell wall pectin. Inhibits the elongation phase of protein synthesis. The polypeptide is Pectinesterase/pectinesterase inhibitor 18 (PME18) (Arabidopsis thaliana (Mouse-ear cress)).